The following is a 155-amino-acid chain: Protein-export protein SecB (155 aa).

Belongs to the SecB family. Homotetramer, a dimer of dimers. One homotetramer interacts with 1 SecA dimer.

The protein localises to the cytoplasm. Functionally, one of the proteins required for the normal export of preproteins out of the cell cytoplasm. It is a molecular chaperone that binds to a subset of precursor proteins, maintaining them in a translocation-competent state. It also specifically binds to its receptor SecA. The sequence is that of Protein-export protein SecB from Klebsiella pneumoniae subsp. pneumoniae (strain ATCC 700721 / MGH 78578).